The chain runs to 366 residues: Melatonin receptor type 1A (366 aa).

Residues 1–45 (MAGRLWGSPGGTPKGNGSSALLNVSQAAPGAGDGVRPRPSWLAAT) are Extracellular-facing. N-linked (GlcNAc...) asparagine glycans are attached at residues Asn-16 and Asn-23. Residues 46–66 (LASILIFTIVVDIVGNLLVVL) traverse the membrane as a helical segment. Residues 67–79 (SVYRNKKLRNAGN) lie on the Cytoplasmic side of the membrane. Residues 80 to 100 (VFVVSLAVADLLVAVYPYPLA) traverse the membrane as a helical segment. Topologically, residues 101-118 (LASIVNNGWSLSSLHCQL) are extracellular. Cys-116 and Cys-193 are disulfide-bonded. Residues 119 to 139 (SGFLMGLSVIGSVFSITGIAI) traverse the membrane as a helical segment. The Cytoplasmic segment spans residues 140-158 (NRYCCICHSLRYGKLYSGT). The helical transmembrane segment at 159–179 (NSLCYVFLIWTLTLVAIVPNL) threads the bilayer. The Extracellular portion of the chain corresponds to 180 to 203 (CVGTLQYDPRIYSCTFTQSVSSAY). A helical membrane pass occupies residues 204–224 (TIAVVVFHFIVPMLVVVFCYL). Over 225–256 (RIWALVLQVRWKVKPDNKPKLKPQDFRNFVTM) the chain is Cytoplasmic. The chain crosses the membrane as a helical span at residues 257 to 277 (FVVFVLFAICWAPLNFIGLVV). Over 278–290 (ASDPASMAPRIPE) the chain is Extracellular. The helical transmembrane segment at 291 to 311 (WLFVASYYMAYFNSCLNAIIY) threads the bilayer. Residues 312–366 (GLLNQNFRQEYRKIIVSLCTTKMFFVDSSNHVADRIKRKPSPLIANHNLIKVDSV) are Cytoplasmic-facing.

It belongs to the G-protein coupled receptor 1 family.

It localises to the cell membrane. Functionally, high affinity receptor for melatonin. Likely to mediate the reproductive and circadian actions of melatonin. The activity of this receptor is mediated by pertussis toxin sensitive G proteins that inhibit adenylate cyclase activity. Possibly involved in sleep induction, by melatonin activation of the potassium channel KCNMA1/BK and the dissociation of G-beta and G-gamma subunits, thereby decreasing synaptic transmission. The sequence is that of Melatonin receptor type 1A (MTNR1A) from Ovis aries (Sheep).